Consider the following 585-residue polypeptide: Neopullulanase 2 (585 aa).

Residues Asn-143, Asp-145, Asn-148, Asp-149, Gly-169, and Asp-171 each coordinate Ca(2+). The substrate site is built by His-244 and Arg-323. Asp-325 acts as the Nucleophile in catalysis. Glu-354 functions as the Proton donor in the catalytic mechanism. Residues His-420 to Asp-421, Asp-465, and Arg-469 each bind substrate.

This sequence belongs to the glycosyl hydrolase 13 family. Monomer. Ca(2+) is required as a cofactor.

The catalysed reaction is Hydrolysis of pullulan to panose (6-alpha-D-glucosylmaltose).. In terms of biological role, hydrolyzes pullulan efficiently but only a small amount of starch. Endohydrolysis of 1,4-alpha-glucosidic linkages in pullulan to form panose. Also cleaves (1-6)-alpha-glucosidic linkages to form maltotriose. This is Neopullulanase 2 (tvaII) from Thermoactinomyces vulgaris.